Consider the following 73-residue polypeptide: Probable cytochrome b-c1 complex subunit 8 (73 aa).

Residues 1 to 42 (MGQASKVFGKQITYSVSPFQQKLFVNYFKNAIPHLRRGVKDN) are Mitochondrial matrix-facing. A helical membrane pass occupies residues 43–60 (FFCSVPYFAALYITVNWA). Topologically, residues 61–73 (NETYHNEMKDHWY) are mitochondrial intermembrane.

The protein belongs to the UQCRQ/QCR8 family. Component of the ubiquinol-cytochrome c oxidoreductase (cytochrome b-c1 complex, complex III, CIII), a multisubunit enzyme composed of 3 respiratory subunits cytochrome b, cytochrome c1 and Rieske protein, 2 core protein subunits, and additional low-molecular weight protein subunits. The complex exists as an obligatory dimer and forms supercomplexes (SCs) in the inner mitochondrial membrane with cytochrome c oxidase (complex IV, CIV).

It localises to the mitochondrion inner membrane. Its function is as follows. Component of the ubiquinol-cytochrome c oxidoreductase, a multisubunit transmembrane complex that is part of the mitochondrial electron transport chain which drives oxidative phosphorylation. The respiratory chain contains 3 multisubunit complexes succinate dehydrogenase (complex II, CII), ubiquinol-cytochrome c oxidoreductase (cytochrome b-c1 complex, complex III, CIII) and cytochrome c oxidase (complex IV, CIV), that cooperate to transfer electrons derived from NADH and succinate to molecular oxygen, creating an electrochemical gradient over the inner membrane that drives transmembrane transport and the ATP synthase. The cytochrome b-c1 complex catalyzes electron transfer from ubiquinol to cytochrome c, linking this redox reaction to translocation of protons across the mitochondrial inner membrane, with protons being carried across the membrane as hydrogens on the quinol. In the process called Q cycle, 2 protons are consumed from the matrix, 4 protons are released into the intermembrane space and 2 electrons are passed to cytochrome c. In Dictyostelium discoideum (Social amoeba), this protein is Probable cytochrome b-c1 complex subunit 8.